We begin with the raw amino-acid sequence, 461 residues long: Ribonuclease inhibitor (461 aa).

Residue S2 is modified to N-acetylserine. Positions 2-11 (SLDIQSLDIQ) are 2 X 5 AA tandem repeats of S-L-D-I-Q. 15 LRR repeats span residues 20 to 48 (WAEL…CKDI), 49 to 76 (SSAL…VHCV), 77 to 105 (LQGL…CGVL), 106 to 133 (SSTL…LQLL), 134 to 162 (CEGL…CKPL), 163 to 190 (ASVL…VRVL), 191 to 219 (CQGL…CRDL), 220 to 247 (CGIV…MAEL), 248 to 276 (CPGL…CGDL), 277 to 304 (CRVL…ARLL), 305 to 333 (CETL…CSHF), 334 to 361 (SSVL…VQEL), 362 to 390 (CQGL…CSSL), 391 to 418 (AATL…ILQL), and 419 to 447 (VESV…EDRL). Phosphoserine is present on S91.

As to quaternary structure, forms high-affinity heterodimers with RNASE1, ANG and RNASE2.

Its subcellular location is the cytoplasm. The protein localises to the nucleus. Functionally, ribonuclease inhibitor which inhibits RNASE1, RNASE2 and angiogenin (ANG). May play a role in redox homeostasis. Required to inhibit the cytotoxic tRNA ribonuclease activity of ANG in the cytoplasm in absence of stress. Relocates to the nucleus in response to stress, relieving inhibition of ANG in the cytoplasm, and inhibiting the angiogenic activity of ANG in the nucleus. The sequence is that of Ribonuclease inhibitor (RNH1) from Pan troglodytes (Chimpanzee).